The following is a 482-amino-acid chain: 2-succinylbenzoate--CoA ligase (482 aa).

Belongs to the ATP-dependent AMP-binding enzyme family. MenE subfamily.

The enzyme catalyses 2-succinylbenzoate + ATP + CoA = 2-succinylbenzoyl-CoA + AMP + diphosphate. The protein operates within quinol/quinone metabolism; 1,4-dihydroxy-2-naphthoate biosynthesis; 1,4-dihydroxy-2-naphthoate from chorismate: step 5/7. It participates in quinol/quinone metabolism; menaquinone biosynthesis. Its function is as follows. Converts 2-succinylbenzoate (OSB) to 2-succinylbenzoyl-CoA (OSB-CoA). This is 2-succinylbenzoate--CoA ligase from Bacillus thuringiensis subsp. konkukian (strain 97-27).